The primary structure comprises 151 residues: Small ribosomal subunit protein uS15 (151 aa).

Belongs to the universal ribosomal protein uS15 family. In terms of assembly, component of the small ribosomal subunit.

Its subcellular location is the cytoplasm. In terms of biological role, component of the small ribosomal subunit. The ribosome is a large ribonucleoprotein complex responsible for the synthesis of proteins in the cell. The chain is Small ribosomal subunit protein uS15 (rps13) from Gillichthys mirabilis (Long-jawed mudsucker).